Consider the following 299-residue polypeptide: Endonuclease G, mitochondrial (299 aa).

The transit peptide at Met1 to Ala48 directs the protein to the mitochondrion. Thr130 carries the post-translational modification Phosphothreonine. Residue His143 is the Proton acceptor of the active site. Asn174 serves as a coordination point for Mg(2+). Positions Ala288 to Ser298 are essential for deoxyribonuclease activity. Position 290 is a phosphoserine (Ser290).

It belongs to the DNA/RNA non-specific endonuclease family. Homodimer; disulfide-linked. Homodimerization is essential for its activity. Interacts with YWHAG. Mg(2+) is required as a cofactor. GSK3-beta-mediated dual phosphorylations at Thr-130 and Ser-290 is necessary for its interaction with YWHAG and the induction of autophagy.

Its subcellular location is the mitochondrion. Endonuclease that preferentially catalyzes the cleavage of double-stranded 5-hydroxymethylcytosine (5hmC)-modified DNA. The 5hmC-modified nucleotide does not increase the binding affinity, but instead increases the efficiency of cutting and specifies the site of cleavage for the modified DNAs. Shows significantly higher affinity for four- stranded Holliday junction over duplex and single-stranded DNAs. Promotes conservative recombination when the DNA is 5hmC-modified. Promotes autophagy through the suppression of mTOR by its phosphorylation-mediated interaction with YWHAG and its endonuclease activity-mediated DNA damage response. GSK3-beta mediated phosphorylation of ENDOG enhances its interaction with YWHAG, leading to the release of TSC2 and PIK3C3 from YWHAG resulting in mTOR pathway suppression and autophagy initiation. Promotes cleavage of mtDNA in response to oxidative and nitrosative stress, in turn inducing compensatory mtDNA replication. The chain is Endonuclease G, mitochondrial (ENDOG) from Bos taurus (Bovine).